A 690-amino-acid chain; its full sequence is Polyribonucleotide nucleotidyltransferase (690 aa).

Positions 483 and 489 each coordinate Mg(2+). The KH domain maps to 550–609 (PKMEQITVDKKDIAAVIGKGGATIREIVEKSGAKLDVNDEGVVTVAAPDEESRNIAMQMI). In terms of domain architecture, S1 motif spans 619–686 (NKIYSGKVMK…DRGKVKLSMK (68 aa)).

The protein belongs to the polyribonucleotide nucleotidyltransferase family. Mg(2+) is required as a cofactor.

It is found in the cytoplasm. It carries out the reaction RNA(n+1) + phosphate = RNA(n) + a ribonucleoside 5'-diphosphate. Involved in mRNA degradation. Catalyzes the phosphorolysis of single-stranded polyribonucleotides processively in the 3'- to 5'-direction. The polypeptide is Polyribonucleotide nucleotidyltransferase (Pelagibacter ubique (strain HTCC1062)).